A 118-amino-acid chain; its full sequence is Large ribosomal subunit protein bL19 (118 aa).

Belongs to the bacterial ribosomal protein bL19 family.

Functionally, this protein is located at the 30S-50S ribosomal subunit interface and may play a role in the structure and function of the aminoacyl-tRNA binding site. In Geotalea uraniireducens (strain Rf4) (Geobacter uraniireducens), this protein is Large ribosomal subunit protein bL19.